Consider the following 443-residue polypeptide: Proline--tRNA ligase (443 aa).

Belongs to the class-II aminoacyl-tRNA synthetase family. ProS type 2 subfamily. As to quaternary structure, homodimer.

It localises to the cytoplasm. The catalysed reaction is tRNA(Pro) + L-proline + ATP = L-prolyl-tRNA(Pro) + AMP + diphosphate. Functionally, catalyzes the attachment of proline to tRNA(Pro) in a two-step reaction: proline is first activated by ATP to form Pro-AMP and then transferred to the acceptor end of tRNA(Pro). The protein is Proline--tRNA ligase of Zymomonas mobilis subsp. mobilis (strain ATCC 31821 / ZM4 / CP4).